The following is a 171-amino-acid chain: MNNNRKIFEEVQNFVQNYDLNKDGSVTSYDIYLSFLKKMNGDVYKASQATGVLCSTIDMDHDGKFTYCEIAKYCVDKAKKQIEQNAEIAALADVEAMLLRFDKDKDKKLSQTEFLEYFKGRGYTPYSDRDQYLKIIDLDKDGCVSVNELQEWFKKRRIDYATMLSARGPNC.

4 EF-hand domains span residues 6 to 41, 57 to 80, 89 to 124, and 130 to 159; these read KIFEEVQNFVQNYDLNKDGSVTSYDIYLSFLKKMNG, IDMDHDGKFTYCEIAKYCVDKAKK, AALADVEAMLLRFDKDKDKKLSQTEFLEYFKGRGYT, and DQYLKIIDLDKDGCVSVNELQEWFKKRRID. Residues Asp-19, Asn-21, Asp-23, Ser-25, and Asp-30 each coordinate Ca(2+). Positions 102, 104, 106, 108, 113, 137, 139, 141, 143, and 148 each coordinate Ca(2+).

This Dictyostelium discoideum (Social amoeba) protein is Calcium-binding protein F-like (cbp12).